Here is a 156-residue protein sequence, read N- to C-terminus: Small ribosomal subunit protein uS7 (156 aa).

The protein belongs to the universal ribosomal protein uS7 family. Part of the 30S ribosomal subunit. Contacts proteins S9 and S11.

In terms of biological role, one of the primary rRNA binding proteins, it binds directly to 16S rRNA where it nucleates assembly of the head domain of the 30S subunit. Is located at the subunit interface close to the decoding center, probably blocks exit of the E-site tRNA. The protein is Small ribosomal subunit protein uS7 of Halalkalibacterium halodurans (strain ATCC BAA-125 / DSM 18197 / FERM 7344 / JCM 9153 / C-125) (Bacillus halodurans).